A 237-amino-acid chain; its full sequence is Ribonuclease PH (237 aa).

Residues Arg-86 and 124-126 each bind phosphate; that span reads GTR.

The protein belongs to the RNase PH family. In terms of assembly, homohexameric ring arranged as a trimer of dimers.

The catalysed reaction is tRNA(n+1) + phosphate = tRNA(n) + a ribonucleoside 5'-diphosphate. Functionally, phosphorolytic 3'-5' exoribonuclease that plays an important role in tRNA 3'-end maturation. Removes nucleotide residues following the 3'-CCA terminus of tRNAs; can also add nucleotides to the ends of RNA molecules by using nucleoside diphosphates as substrates, but this may not be physiologically important. Probably plays a role in initiation of 16S rRNA degradation (leading to ribosome degradation) during starvation. In Myxococcus xanthus (strain DK1622), this protein is Ribonuclease PH.